The sequence spans 124 residues: RNA polymerase-binding protein RbpA (124 aa).

Residues Cys34, His38, Cys56, and Cys59 each coordinate Zn(2+). The tract at residues 73-124 is sufficient for interaction with HrdB (SigA); sequence EKKAKPARTHWDMLMERRTREELEEVLEERLAVLRSGAMNIAVHPRDSRKSA.

This sequence belongs to the RNA polymerase-binding protein RbpA family. In terms of assembly, homodimer. Forms a complex with the RNAP, and a complex with RNAP plus principal sigma factor HrdB associated with promoter. Binds to free principal sigma factors HrdB and HrdA, probably via the sigma-2 domain, but not to 6 other sigma factors tested. Zn(2+) is required as a cofactor.

Its function is as follows. Binds to RNA polymerase (RNAP), stimulating transcription from principal, but not alternative sigma factor promoters. Stimulates transcription from several principal sigma factor HrdB (SigA)-dependent promoters but not from a SigR-dependent promoter. Stimulation occurs in the presence of the transcription initiation inhibitor rifampicin (Rif). In Streptomyces coelicolor (strain ATCC BAA-471 / A3(2) / M145), this protein is RNA polymerase-binding protein RbpA.